Reading from the N-terminus, the 103-residue chain is Phosphoribosyl-ATP pyrophosphatase (103 aa).

This sequence belongs to the PRA-PH family.

Its subcellular location is the cytoplasm. It carries out the reaction 1-(5-phospho-beta-D-ribosyl)-ATP + H2O = 1-(5-phospho-beta-D-ribosyl)-5'-AMP + diphosphate + H(+). It functions in the pathway amino-acid biosynthesis; L-histidine biosynthesis; L-histidine from 5-phospho-alpha-D-ribose 1-diphosphate: step 2/9. This chain is Phosphoribosyl-ATP pyrophosphatase (hisE), found in Rhodobacter capsulatus (strain ATCC BAA-309 / NBRC 16581 / SB1003).